The primary structure comprises 224 residues: 4'-phosphopantetheinyl transferase (224 aa).

Mg(2+)-binding residues include D107, E109, and E151. Residues 158–189 (GKGLSLPLDSFSVRLKDDGHVSIELPDGHEPC) form a peptidyl carrier protein binding region.

Belongs to the P-Pant transferase superfamily. Gsp/Sfp/HetI/AcpT family. Mg(2+) is required as a cofactor.

It carries out the reaction apo-[peptidyl-carrier protein] + CoA = holo-[peptidyl-carrier protein] + adenosine 3',5'-bisphosphate + H(+). Functionally, may activate the peptidyl carrier protein (PCP) domains of surfactin synthetase SRF1/2/3 and iturin A synthetase, by transferring the 4'-phosphopantetheinyl moiety of coenzyme A (CoA) to a serine residue. Required for the coproduction of the lipopeptide antibiotics, iturin A and surfactin. The protein is 4'-phosphopantetheinyl transferase (lpa-14) of Bacillus subtilis.